The following is a 279-amino-acid chain: Alcohol dehydrogenase-related 31 kDa protein (279 aa).

Residue Tyr11–Leu34 participates in NAD(+) binding. Ser139 provides a ligand contact to substrate. Residue Tyr152 is the Proton acceptor of the active site.

This sequence belongs to the short-chain dehydrogenases/reductases (SDR) family.

This chain is Alcohol dehydrogenase-related 31 kDa protein (Adhr), found in Drosophila madeirensis (Fruit fly).